We begin with the raw amino-acid sequence, 428 residues long: Tyrosine--tRNA ligase (428 aa).

An L-tyrosine-binding site is contributed by Y34. Positions P39–H48 match the 'HIGH' region motif. 2 residues coordinate L-tyrosine: Y171 and Q175. The 'KMSKS' region signature appears at K236–T240. An ATP-binding site is contributed by K239. In terms of domain architecture, S4 RNA-binding spans V358–V424.

It belongs to the class-I aminoacyl-tRNA synthetase family. TyrS type 1 subfamily. Homodimer.

It is found in the cytoplasm. The enzyme catalyses tRNA(Tyr) + L-tyrosine + ATP = L-tyrosyl-tRNA(Tyr) + AMP + diphosphate + H(+). Its function is as follows. Catalyzes the attachment of tyrosine to tRNA(Tyr) in a two-step reaction: tyrosine is first activated by ATP to form Tyr-AMP and then transferred to the acceptor end of tRNA(Tyr). This is Tyrosine--tRNA ligase from Oceanobacillus iheyensis (strain DSM 14371 / CIP 107618 / JCM 11309 / KCTC 3954 / HTE831).